Consider the following 91-residue polypeptide: Sec-independent protein translocase protein TatA (91 aa).

The helical transmembrane segment at 2–22 (ANLGFPELVLIAVVILVLFGW) threads the bilayer. Basic and acidic residues predominate over residues 43 to 55 (VSEMKNDGAEAEK). The disordered stretch occupies residues 43–91 (VSEMKNDGAEAEKTSAASTKTDEITSVSSTDTPQPTVTVESKDEKKHPA). The segment covering 57-81 (SAASTKTDEITSVSSTDTPQPTVTV) has biased composition (polar residues). Positions 82–91 (ESKDEKKHPA) are enriched in basic and acidic residues.

It belongs to the TatA/E family. The Tat system comprises two distinct complexes: a TatABC complex, containing multiple copies of TatA, TatB and TatC subunits, and a separate TatA complex, containing only TatA subunits. Substrates initially bind to the TatABC complex, which probably triggers association of the separate TatA complex to form the active translocon.

The protein resides in the cell membrane. In terms of biological role, part of the twin-arginine translocation (Tat) system that transports large folded proteins containing a characteristic twin-arginine motif in their signal peptide across membranes. TatA could form the protein-conducting channel of the Tat system. This Corynebacterium kroppenstedtii (strain DSM 44385 / JCM 11950 / CIP 105744 / CCUG 35717) protein is Sec-independent protein translocase protein TatA.